The sequence spans 187 residues: UPF0301 protein KPK_0728 (187 aa).

It belongs to the UPF0301 (AlgH) family.

The sequence is that of UPF0301 protein KPK_0728 from Klebsiella pneumoniae (strain 342).